We begin with the raw amino-acid sequence, 359 residues long: RNA-binding protein 4B (359 aa).

RRM domains lie at 2 to 72 (VKLF…ASKN) and 78 to 148 (TKLH…LSTS). Residues 160–177 (SGCYRCGKEGHWSKECPV) form a CCHC-type zinc finger. The tract at residues 196 to 359 (AVRTPYTMGY…YVDRARYSAF (164 aa)) is interaction with TNPO3.

In terms of assembly, interacts with TNPO3, which may mediate nuclear import of the protein. As to expression, expressed in liver and kidney (at protein level). Ubiquitously expressed.

It localises to the nucleus. It is found in the nucleolus. In terms of biological role, required for the translational activation of PER1 mRNA in response to circadian clock. Binds directly to the 3'-UTR of the PER1 mRNA. The polypeptide is RNA-binding protein 4B (RBM4B) (Homo sapiens (Human)).